A 308-amino-acid polypeptide reads, in one-letter code: Mitochondrial import receptor subunit TOM40B (308 aa).

The disordered stretch occupies residues 1-29 (MGNTLGLAPMGALPRRSPRREEPLPNPGS). Positions 281–308 (PLPVTLALGAFLNHWRNRFHCGFSITVG) are required for mitochondrial targeting.

This sequence belongs to the Tom40 family. As to quaternary structure, forms part of the preprotein translocase of the outer mitochondrial membrane (TOM complex) containing TOMM22, TOMM40, TOMM40L and TOMM70. Interacts with mitochondrial targeting sequences.

The protein resides in the mitochondrion outer membrane. Potential channel-forming protein implicated in import of protein precursors into mitochondria. This Bos taurus (Bovine) protein is Mitochondrial import receptor subunit TOM40B.